We begin with the raw amino-acid sequence, 195 residues long: MKKFAVFASGNGSNFEAIVTRLKEENWDASAALLVCDKPQAKVIERAEAFHIPSFAFEPKSYENKAAFEQAIIEQLRLHEVELIALAGYMRLIGDTLLQAYGGKIINIHPSLLPAFPGIDAVGQAFRAGVKVAGITVHYVDEGMDTGPIIAQKAIEIDEHDTLETIEQRIHKLEHKWYPSVIKQLLGLNNRGEKA.

Residue 12–14 (GSN) coordinates N(1)-(5-phospho-beta-D-ribosyl)glycinamide. Residues lysine 65, 90 to 93 (MRLI), and asparagine 107 each bind (6R)-10-formyltetrahydrofolate. The active-site Proton donor is histidine 109.

It belongs to the GART family.

It carries out the reaction N(1)-(5-phospho-beta-D-ribosyl)glycinamide + (6R)-10-formyltetrahydrofolate = N(2)-formyl-N(1)-(5-phospho-beta-D-ribosyl)glycinamide + (6S)-5,6,7,8-tetrahydrofolate + H(+). The protein operates within purine metabolism; IMP biosynthesis via de novo pathway; N(2)-formyl-N(1)-(5-phospho-D-ribosyl)glycinamide from N(1)-(5-phospho-D-ribosyl)glycinamide (10-formyl THF route): step 1/1. Catalyzes the transfer of a formyl group from 10-formyltetrahydrofolate to 5-phospho-ribosyl-glycinamide (GAR), producing 5-phospho-ribosyl-N-formylglycinamide (FGAR) and tetrahydrofolate. In Bacillus subtilis (strain 168), this protein is Phosphoribosylglycinamide formyltransferase.